The primary structure comprises 258 residues: Imidazole glycerol phosphate synthase subunit HisF (258 aa).

Active-site residues include D12 and D131.

This sequence belongs to the HisA/HisF family. Heterodimer of HisH and HisF.

It localises to the cytoplasm. It carries out the reaction 5-[(5-phospho-1-deoxy-D-ribulos-1-ylimino)methylamino]-1-(5-phospho-beta-D-ribosyl)imidazole-4-carboxamide + L-glutamine = D-erythro-1-(imidazol-4-yl)glycerol 3-phosphate + 5-amino-1-(5-phospho-beta-D-ribosyl)imidazole-4-carboxamide + L-glutamate + H(+). The protein operates within amino-acid biosynthesis; L-histidine biosynthesis; L-histidine from 5-phospho-alpha-D-ribose 1-diphosphate: step 5/9. IGPS catalyzes the conversion of PRFAR and glutamine to IGP, AICAR and glutamate. The HisF subunit catalyzes the cyclization activity that produces IGP and AICAR from PRFAR using the ammonia provided by the HisH subunit. This chain is Imidazole glycerol phosphate synthase subunit HisF, found in Pseudarthrobacter chlorophenolicus (strain ATCC 700700 / DSM 12829 / CIP 107037 / JCM 12360 / KCTC 9906 / NCIMB 13794 / A6) (Arthrobacter chlorophenolicus).